The primary structure comprises 853 residues: Auxin response factor 23 (853 aa).

Residues Lys121 to His141 are disordered. The TF-B3 DNA-binding region spans Phe149 to Met251. 2 disordered regions span residues Glu422–Pro471 and Pro647–Ser723. Polar residues predominate over residues Pro425–Lys455. The span at Glu672–Asp686 shows a compositional bias: basic and acidic residues. Positions Pro706–Ser723 are enriched in polar residues. One can recognise a PB1 domain in the interval Arg725–Glu809. Residues Pro815–Cys853 form a disordered region. A compositionally biased stretch (polar residues) spans Leu843–Cys853.

Belongs to the ARF family. In terms of assembly, homodimers and heterodimers.

The protein resides in the nucleus. Its function is as follows. Auxin response factors (ARFs) are transcriptional factors that bind specifically to the DNA sequence 5'-TGTCTC-3' found in the auxin-responsive promoter elements (AuxREs). This is Auxin response factor 23 (ARF23) from Oryza sativa subsp. indica (Rice).